Reading from the N-terminus, the 367-residue chain is Queuine tRNA-ribosyltransferase (367 aa).

Aspartate 92 (proton acceptor) is an active-site residue. Substrate contacts are provided by residues 92-96 (DSGGF), aspartate 146, glutamine 188, and glycine 215. An RNA binding region spans residues 246–252 (GVGTPKD). The active-site Nucleophile is the aspartate 265. Residues cysteine 303, cysteine 305, cysteine 308, and histidine 334 each contribute to the Zn(2+) site.

It belongs to the queuine tRNA-ribosyltransferase family. In terms of assembly, homodimer. Within each dimer, one monomer is responsible for RNA recognition and catalysis, while the other monomer binds to the replacement base PreQ1. Requires Zn(2+) as cofactor.

It carries out the reaction 7-aminomethyl-7-carbaguanine + guanosine(34) in tRNA = 7-aminomethyl-7-carbaguanosine(34) in tRNA + guanine. Its pathway is tRNA modification; tRNA-queuosine biosynthesis. Its function is as follows. Catalyzes the base-exchange of a guanine (G) residue with the queuine precursor 7-aminomethyl-7-deazaguanine (PreQ1) at position 34 (anticodon wobble position) in tRNAs with GU(N) anticodons (tRNA-Asp, -Asn, -His and -Tyr). Catalysis occurs through a double-displacement mechanism. The nucleophile active site attacks the C1' of nucleotide 34 to detach the guanine base from the RNA, forming a covalent enzyme-RNA intermediate. The proton acceptor active site deprotonates the incoming PreQ1, allowing a nucleophilic attack on the C1' of the ribose to form the product. After dissociation, two additional enzymatic reactions on the tRNA convert PreQ1 to queuine (Q), resulting in the hypermodified nucleoside queuosine (7-(((4,5-cis-dihydroxy-2-cyclopenten-1-yl)amino)methyl)-7-deazaguanosine). The sequence is that of Queuine tRNA-ribosyltransferase from Francisella tularensis subsp. tularensis (strain FSC 198).